A 227-amino-acid polypeptide reads, in one-letter code: ATP-dependent dethiobiotin synthetase BioD (227 aa).

ATP is bound at residue 13 to 18; it reads DIGKTY. Thr17 lines the Mg(2+) pocket. Residue Lys38 is part of the active site. Position 42 (Ser42) interacts with substrate. ATP is bound by residues Asp55, 116-119, and 179-180; these read EGSG and NN. Residues Asp55 and Glu116 each coordinate Mg(2+).

This sequence belongs to the dethiobiotin synthetase family. In terms of assembly, homodimer. It depends on Mg(2+) as a cofactor.

Its subcellular location is the cytoplasm. It catalyses the reaction (7R,8S)-7,8-diammoniononanoate + CO2 + ATP = (4R,5S)-dethiobiotin + ADP + phosphate + 3 H(+). Its pathway is cofactor biosynthesis; biotin biosynthesis; biotin from 7,8-diaminononanoate: step 1/2. Catalyzes a mechanistically unusual reaction, the ATP-dependent insertion of CO2 between the N7 and N8 nitrogen atoms of 7,8-diaminopelargonic acid (DAPA, also called 7,8-diammoniononanoate) to form a ureido ring. In Clostridium botulinum (strain Alaska E43 / Type E3), this protein is ATP-dependent dethiobiotin synthetase BioD.